A 263-amino-acid polypeptide reads, in one-letter code: MVSMRDLLECGVHFGHQTRRWNPKMKKFIFGERKGIYVIDLQKTLRYFRYTYNIVRDAAAEGKTILFVGTKKQAGGAIKEYAEKCGMPYVNHRWLGGMMTNFGTIRQSIRKLEVIEKMEEDGSIKLLTKKEALMLTRKKEKLLAYLGGIRYMKTQPDMIFVIDTVKEKIAVQEANRLRIPVVAPLDTNCDPDLVTYPIPGNDDAIRSVQLFCQEMAEAINEGKALREQDGEALANEEKEITDEEKKEVLDEAMSEEDFGEEQE.

The segment covering 223–249 (KALREQDGEALANEEKEITDEEKKEVL) has biased composition (basic and acidic residues). The interval 223–263 (KALREQDGEALANEEKEITDEEKKEVLDEAMSEEDFGEEQE) is disordered. A compositionally biased stretch (acidic residues) spans 250–263 (DEAMSEEDFGEEQE).

The protein belongs to the universal ribosomal protein uS2 family.

The sequence is that of Small ribosomal subunit protein uS2 from Campylobacter jejuni subsp. jejuni serotype O:6 (strain 81116 / NCTC 11828).